Here is a 373-residue protein sequence, read N- to C-terminus: Inhibitor of nuclear factor kappa-B kinase-interacting protein (373 aa).

The segment covering 1 to 11 (MSEVKSRKKPG) has biased composition (basic residues). The segment at 1–38 (MSEVKSRKKPGPKVAAPEPEKRSDGRKNPEARGDAGWA) is disordered. Basic and acidic residues predominate over residues 18-33 (EPEKRSDGRKNPEARG). Residues 43–59 (GLSLLSLAMTLGLAWLV) traverse the membrane as a helical segment. 2 coiled-coil regions span residues 86–257 (LQSK…NKLS) and 285–324 (QDLI…TLEG). Residue Asn151 is glycosylated (N-linked (GlcNAc...) asparagine).

Post-translationally, N-glycosylated at Asn-151.

The protein localises to the endoplasmic reticulum membrane. Its function is as follows. Target of p53/TP53 with pro-apoptotic function. The protein is Inhibitor of nuclear factor kappa-B kinase-interacting protein (Ikbip) of Mus musculus (Mouse).